Here is a 352-residue protein sequence, read N- to C-terminus: S-adenosylmethionine:tRNA ribosyltransferase-isomerase (352 aa).

This sequence belongs to the QueA family. As to quaternary structure, monomer.

It localises to the cytoplasm. It catalyses the reaction 7-aminomethyl-7-carbaguanosine(34) in tRNA + S-adenosyl-L-methionine = epoxyqueuosine(34) in tRNA + adenine + L-methionine + 2 H(+). It participates in tRNA modification; tRNA-queuosine biosynthesis. Functionally, transfers and isomerizes the ribose moiety from AdoMet to the 7-aminomethyl group of 7-deazaguanine (preQ1-tRNA) to give epoxyqueuosine (oQ-tRNA). In Bacteroides fragilis (strain ATCC 25285 / DSM 2151 / CCUG 4856 / JCM 11019 / LMG 10263 / NCTC 9343 / Onslow / VPI 2553 / EN-2), this protein is S-adenosylmethionine:tRNA ribosyltransferase-isomerase.